The chain runs to 381 residues: Succinyl-diaminopimelate desuccinylase (381 aa).

His72 provides a ligand contact to Zn(2+). The active site involves Asp74. Zn(2+) is bound at residue Asp105. Glu139 functions as the Proton acceptor in the catalytic mechanism. Zn(2+)-binding residues include Glu140, Glu168, and His354.

Belongs to the peptidase M20A family. DapE subfamily. Homodimer. Zn(2+) serves as cofactor. Co(2+) is required as a cofactor.

The catalysed reaction is N-succinyl-(2S,6S)-2,6-diaminopimelate + H2O = (2S,6S)-2,6-diaminopimelate + succinate. Its pathway is amino-acid biosynthesis; L-lysine biosynthesis via DAP pathway; LL-2,6-diaminopimelate from (S)-tetrahydrodipicolinate (succinylase route): step 3/3. Functionally, catalyzes the hydrolysis of N-succinyl-L,L-diaminopimelic acid (SDAP), forming succinate and LL-2,6-diaminopimelate (DAP), an intermediate involved in the bacterial biosynthesis of lysine and meso-diaminopimelic acid, an essential component of bacterial cell walls. The polypeptide is Succinyl-diaminopimelate desuccinylase (Shewanella sp. (strain MR-4)).